A 306-amino-acid polypeptide reads, in one-letter code: S-methyl-5'-thioadenosine phosphorylase (306 aa).

Phosphate-binding positions include threonine 21, 63–64 (RH), and 96–97 (SA). Methionine 198 contacts substrate. Serine 199 contacts phosphate. 222–224 (DYD) is a substrate binding site.

It belongs to the PNP/MTAP phosphorylase family. MTAP subfamily. As to quaternary structure, homotrimer.

It is found in the cytoplasm. The protein resides in the nucleus. The enzyme catalyses S-methyl-5'-thioadenosine + phosphate = 5-(methylsulfanyl)-alpha-D-ribose 1-phosphate + adenine. It participates in amino-acid biosynthesis; L-methionine biosynthesis via salvage pathway; S-methyl-5-thio-alpha-D-ribose 1-phosphate from S-methyl-5'-thioadenosine (phosphorylase route): step 1/1. Its function is as follows. Catalyzes the reversible phosphorylation of S-methyl-5'-thioadenosine (MTA) to adenine and 5-methylthioribose-1-phosphate. Involved in the breakdown of MTA, a major by-product of polyamine biosynthesis. Responsible for the first step in the methionine salvage pathway after MTA has been generated from S-adenosylmethionine. Has broad substrate specificity with 6-aminopurine nucleosides as preferred substrates. The sequence is that of S-methyl-5'-thioadenosine phosphorylase from Sclerotinia sclerotiorum (strain ATCC 18683 / 1980 / Ss-1) (White mold).